The sequence spans 406 residues: Formate-dependent phosphoribosylglycinamide formyltransferase (406 aa).

N(1)-(5-phospho-beta-D-ribosyl)glycinamide contacts are provided by residues 27–28 and Glu87; that span reads EL. Residues Arg120, Lys162, 167-172, 202-205, and Glu210 contribute to the ATP site; these read SSGKGQ and EGFI. Residues 125-320 enclose the ATP-grasp domain; sequence RLAAETLGLP…EFELHARALL (196 aa). Positions 279 and 291 each coordinate Mg(2+). N(1)-(5-phospho-beta-D-ribosyl)glycinamide-binding positions include Asp298, Lys367, and 374 to 375; that span reads RR.

The protein belongs to the PurK/PurT family. Homodimer.

It catalyses the reaction N(1)-(5-phospho-beta-D-ribosyl)glycinamide + formate + ATP = N(2)-formyl-N(1)-(5-phospho-beta-D-ribosyl)glycinamide + ADP + phosphate + H(+). It functions in the pathway purine metabolism; IMP biosynthesis via de novo pathway; N(2)-formyl-N(1)-(5-phospho-D-ribosyl)glycinamide from N(1)-(5-phospho-D-ribosyl)glycinamide (formate route): step 1/1. Its function is as follows. Involved in the de novo purine biosynthesis. Catalyzes the transfer of formate to 5-phospho-ribosyl-glycinamide (GAR), producing 5-phospho-ribosyl-N-formylglycinamide (FGAR). Formate is provided by PurU via hydrolysis of 10-formyl-tetrahydrofolate. This Bordetella parapertussis (strain 12822 / ATCC BAA-587 / NCTC 13253) protein is Formate-dependent phosphoribosylglycinamide formyltransferase.